The chain runs to 275 residues: Bis(5'-nucleosyl)-tetraphosphatase, symmetrical (275 aa).

Belongs to the Ap4A hydrolase family.

The enzyme catalyses P(1),P(4)-bis(5'-adenosyl) tetraphosphate + H2O = 2 ADP + 2 H(+). Its function is as follows. Hydrolyzes diadenosine 5',5'''-P1,P4-tetraphosphate to yield ADP. The protein is Bis(5'-nucleosyl)-tetraphosphatase, symmetrical of Marinomonas sp. (strain MWYL1).